The primary structure comprises 764 residues: Transient receptor potential cation channel subfamily V member 2 (764 aa).

The interval 1-46 (MTSPSSSPVFRLETLDGGQEDGSEADRGKLDFGSGLPPMESQFQGE) is disordered. The tract at residues 1 to 388 (MTSPSSSPVF…LLQAKWDLLI (388 aa)) is required for interaction with SLC50A1. Residues 1–390 (MTSPSSSPVF…QAKWDLLIPK (390 aa)) are Cytoplasmic-facing. At S6 the chain carries Phosphoserine. 6 ANK repeats span residues 72-114 (NRFD…TEGS), 115-161 (TGKT…DDYY), 162-207 (RGHS…TCFY), 208-243 (FGEL…ATDS), 244-292 (QGNT…IRNL), and 293-319 (QDLT…REFS). A helical transmembrane segment spans residues 391–411 (FFLNFLCNLIYMFIFTAVAYH). Residues 412 to 434 (QPTLKKQAAPHLKAEVGNSMLLT) lie on the Extracellular side of the membrane. A helical transmembrane segment spans residues 435-455 (GHILILLGGIYLLVGQLWYFW). Residues 456 to 471 (RRHVFIWISFIDSYFE) are Cytoplasmic-facing. A helical membrane pass occupies residues 472-492 (ILFLFQALLTVVSQVLCFLAI). A topological domain (extracellular) is located at residue E493. A helical transmembrane segment spans residues 494–514 (WYLPLLVSALVLGWLNLLYYT). Residues 515 to 537 (RGFQHTGIYSVMIQKVILRDLLR) lie on the Cytoplasmic side of the membrane. Residues 538–558 (FLLIYLVFLFGFAVALVSLSQ) form a helical membrane-spanning segment. Residues 562–585 (RPEAPTGPNATESVQPMEGQEDEG) form a disordered region. N570 carries N-linked (GlcNAc...) asparagine glycosylation. The pore-forming intramembrane region spans 572–609 (TESVQPMEGQEDEGNGAQYRGILEASLELFKFTIGMGE). A helical membrane pass occupies residues 622 to 642 (VLLLLLAYVLLTYILLLNMLI). Over 643-764 (ALMSETVNSV…YVPVQLLQSN (122 aa)) the chain is Cytoplasmic. Residues 725 to 756 (PSGAGVPRTLENPVLASPPKEDEDGASEENYV) form a disordered region. S751 and S763 each carry phosphoserine.

Belongs to the transient receptor (TC 1.A.4) family. TrpV subfamily. TRPV2 sub-subfamily. In terms of assembly, homotetramer. Interacts with a cAMP-dependent protein kinase type II regulatory subunit (PRKAR2A or PRKAR2B) and ACBD3. Interacts with SLC50A1; the interaction probably occurs intracellularly and depends on TRPV2 N-glycosylation. N-glycosylated. In terms of processing, phosphorylated by PKA.

The protein localises to the cell membrane. Its subcellular location is the cytoplasm. It localises to the melanosome. The enzyme catalyses Ca(2+)(in) = Ca(2+)(out). The catalysed reaction is Mg(2+)(in) = Mg(2+)(out). It catalyses the reaction Na(+)(in) = Na(+)(out). It carries out the reaction K(+)(in) = K(+)(out). In terms of biological role, calcium-permeable, non-selective cation channel with an outward rectification. Seems to be regulated, at least in part, by IGF1, PDGF and neuropeptide head activator. May transduce physical stimuli in mast cells. Activated by temperatures higher than 52 degrees Celsius; is not activated by vanilloids and acidic pH. The protein is Transient receptor potential cation channel subfamily V member 2 (TRPV2) of Homo sapiens (Human).